Consider the following 86-residue polypeptide: Acyl carrier protein (86 aa).

In terms of domain architecture, Carrier spans 10-85; the sequence is DKIEQKVIEM…DVIKYIKERQ (76 aa). S45 is modified (O-(pantetheine 4'-phosphoryl)serine).

This sequence belongs to the acyl carrier protein (ACP) family. 4'-phosphopantetheine is transferred from CoA to a specific serine of apo-ACP by AcpS. This modification is essential for activity because fatty acids are bound in thioester linkage to the sulfhydryl of the prosthetic group.

Its subcellular location is the cytoplasm. Its pathway is lipid metabolism; fatty acid biosynthesis. Functionally, carrier of the growing fatty acid chain in fatty acid biosynthesis. The chain is Acyl carrier protein from Rickettsia africae (strain ESF-5).